The following is a 275-amino-acid chain: Proteasome subunit beta (275 aa).

A propeptide spans 1 to 52 (removed in mature form; by autocatalysis); that stretch reads MQDTTANQVAANATSSFTEHLQRNRPGLLPYNQPFPAALTGAGSQPLQVPHA. The active-site Nucleophile is the Thr-53.

Belongs to the peptidase T1B family. The 20S proteasome core is composed of 14 alpha and 14 beta subunits that assemble into four stacked heptameric rings, resulting in a barrel-shaped structure. The two inner rings, each composed of seven catalytic beta subunits, are sandwiched by two outer rings, each composed of seven alpha subunits. The catalytic chamber with the active sites is on the inside of the barrel. Has a gated structure, the ends of the cylinder being occluded by the N-termini of the alpha-subunits. Is capped by the proteasome-associated ATPase, ARC.

The protein localises to the cytoplasm. The catalysed reaction is Cleavage of peptide bonds with very broad specificity.. It participates in protein degradation; proteasomal Pup-dependent pathway. With respect to regulation, the formation of the proteasomal ATPase ARC-20S proteasome complex, likely via the docking of the C-termini of ARC into the intersubunit pockets in the alpha-rings, may trigger opening of the gate for substrate entry. Interconversion between the open-gate and close-gate conformations leads to a dynamic regulation of the 20S proteasome proteolysis activity. In terms of biological role, component of the proteasome core, a large protease complex with broad specificity involved in protein degradation. This Arthrobacter sp. (strain FB24) protein is Proteasome subunit beta.